A 352-amino-acid polypeptide reads, in one-letter code: Protein NDRG4 (352 aa).

Phosphoserine is present on residues Ser-298, Ser-317, and Ser-323. The disordered stretch occupies residues 301-352 (AVPSASMTRLARSRTASLTSASSVDGSRPQPCTHSDSSEGMGQVNHTMEVSC). Residues 308-323 (TRLARSRTASLTSASS) are compositionally biased toward low complexity. Residues 330–352 (QPCTHSDSSEGMGQVNHTMEVSC) are compositionally biased toward polar residues.

It belongs to the NDRG family. As to expression, expressed in the brain and heart, weakly in the kidney; most prominently in postnatal brain where it is expressed widely in the olfactory bulb, cerebral cortex, hippocampus, cerebellum, thalamus, and medulla oblongata.

Its subcellular location is the cytoplasm. It is found in the cytosol. In terms of biological role, contributes to the maintenance of intracerebral BDNF levels within the normal range, which is necessary for the preservation of spatial learning and the resistance to neuronal cell death caused by ischemic stress. May enhance growth factor-induced ERK1 and ERK2 phosphorylation, including that induced by NGF. May attenuate NGF-promoted ELK1 phosphorylation in a microtubule-dependent manner. This Rattus norvegicus (Rat) protein is Protein NDRG4 (Ndrg4).